Here is a 182-residue protein sequence, read N- to C-terminus: uncharacterized protein (182 aa).

Residues 1-170 enclose the Macro domain; the sequence is MIVKIIKGDI…IFVNIFEREL (170 aa).

This is an uncharacterized protein from Sulfurisphaera tokodaii (strain DSM 16993 / JCM 10545 / NBRC 100140 / 7) (Sulfolobus tokodaii).